Reading from the N-terminus, the 296-residue chain is tRNA dimethylallyltransferase (296 aa).

19–26 (GPTASGKS) is a binding site for ATP. 21–26 (TASGKS) is a substrate binding site.

This sequence belongs to the IPP transferase family. In terms of assembly, monomer. Requires Mg(2+) as cofactor.

The enzyme catalyses adenosine(37) in tRNA + dimethylallyl diphosphate = N(6)-dimethylallyladenosine(37) in tRNA + diphosphate. Catalyzes the transfer of a dimethylallyl group onto the adenine at position 37 in tRNAs that read codons beginning with uridine, leading to the formation of N6-(dimethylallyl)adenosine (i(6)A). The sequence is that of tRNA dimethylallyltransferase from Dinoroseobacter shibae (strain DSM 16493 / NCIMB 14021 / DFL 12).